A 389-amino-acid polypeptide reads, in one-letter code: tRNA-specific 2-thiouridylase MnmA (389 aa).

ATP is bound by residues 35 to 42 (GMSGGVDS) and methionine 61. Residues 121 to 123 (NPD) are interaction with target base in tRNA. Cysteine 126 acts as the Nucleophile in catalysis. Cysteine 126 and cysteine 223 are oxidised to a cystine. Glycine 151 lines the ATP pocket. The tract at residues 173–175 (KDQ) is interaction with tRNA. The Cysteine persulfide intermediate role is filled by cysteine 223. Residues 335–336 (RY) form an interaction with tRNA region.

Belongs to the MnmA/TRMU family.

Its subcellular location is the cytoplasm. The catalysed reaction is S-sulfanyl-L-cysteinyl-[protein] + uridine(34) in tRNA + AH2 + ATP = 2-thiouridine(34) in tRNA + L-cysteinyl-[protein] + A + AMP + diphosphate + H(+). Its function is as follows. Catalyzes the 2-thiolation of uridine at the wobble position (U34) of tRNA, leading to the formation of s(2)U34. The protein is tRNA-specific 2-thiouridylase MnmA of Actinobacillus pleuropneumoniae serotype 5b (strain L20).